The following is a 975-amino-acid chain: MRWGHHLPRASWGSGFRRALQRPDDRIPFLIHWSWPLQGERPFGPPRAFIRHHGSSVDSAPPPGRHGRLFPSASATEAIQRHRRNLAEWFSRLPREERQFGPTFALDTVHVDPVIRESTPDELLRPPAELALEHQPPQAGLPPLALSQLFNPDACGRRVQTVVLYGTVGTGKSTLVRKMVLDWCYGRLPAFELLIPFSCEDLSSLGPAPASLCQLVAQRYTPLKEVLPLMAAAGSHLLFVLHGLEHLNLDFRLAGTGLCSDPEEPQEPAAIIVNLLRKYMLPQASILVTTRPSAIGRIPSKYVGRYGEICGFSDTNLQKLYFQLRLNQPYCGYAVGGSGVSATPAQRDHLVQMLSRNLEGHHQIAAACFLPSYCWLVCATLHFLHAPTPAGQTLTSIYTSFLRLNFSGETLDSTDPSNLSLMAYAARTMGKLAYEGVSSRKTYFSEEDVCGCLEAGIRTEEEFQLLHIFRRDALRFFLAPCVEPGRAGTFVFTVPAMQEYLAALYIVLGLRKTTLQKVGKEVAELVGRVGEDVSLVLGIMAKLLPLRALPLLFNLIKVVPRVFGRMVGKSREAVAQAMVLEMFREEDYYNDDVLDQMGASILGVEGPRRHPDEPPEDEVFELFPMFMGGLLSAHNRAVLAQLGCPIKNLDALENAQAIKKKLGKLGRQVLPPSELLDHLFFHYEFQNQRFSAEVLSSLRQLNLAGVRMTPVKCTVVAAVLGSGRHALDEVNLASCQLDPAGLRTLLPVFLRARKLGLQLNSLGPEACKDLRDLLLHDQCQITTLRLSNNPLTAAGVAVLMEGLAGNTSVTHLSLLHTGLGDEGLELLAAQLDRNRQLQELNVAYNGAGDTAALALARAAREHPSLELLHLYFNELSSEGRQVLRDLGGAAEGGARVVVSLTEGTAVSEYWSVILSEVQRNLNSWDRARVQRHLELLLRDLEDSRGATLNPWRKAQLLRVEGEVRALLEQLGSSGS.

Residues 1 to 86 constitute a mitochondrion transit peptide; that stretch reads MRWGHHLPRA…EAIQRHRRNL (86 aa). Positions 75-556 are required for interaction with MAVS; the sequence is ATEAIQRHRR…RALPLLFNLI (482 aa). The 324-residue stretch at 160–483 folds into the NACHT domain; it reads QTVVLYGTVG…LRFFLAPCVE (324 aa). 166–173 is a binding site for ATP; the sequence is GTVGTGKS. The interval 556 to 974 is required for the repression of MAVS-induced interferon signaling; it reads IKVVPRVFGR…ALLEQLGSSG (419 aa). An LRRNT domain is found at 667 to 694; that stretch reads RQVLPPSELLDHLFFHYEFQNQRFSAEV. LRR repeat units follow at residues 695 to 718, 724 to 747, 749 to 777, 778 to 801, 811 to 834, 835 to 857, 858 to 877, and 878 to 899; these read LSSLRQLNLAGVRMTPVKCTVVAA, RHALDEVNLASCQLDPAGLRTLLP, FLRARKLGLQLNSLGPEACKDLRDLLLHD, QCQITTLRLSNNPLTAAGVAVLME, HLSLLHTGLGDEGLELLAAQLDRN, RQLQELNVAYNGAGDTAALALAR, AAREHPSLELLHLYFNELSS, and EGRQVLRDLGGAAEGGARVVVS. Residues 906-970 form the LRRCT domain; the sequence is VSEYWSVILS…GEVRALLEQL (65 aa).

It belongs to the NLRP family. As to quaternary structure, homohexamer. Interacts with MAVS. Interacts with TUFM. (Microbial infection) Interacts with influenza A virus protein PB1-F2. As to expression, ubiquitously expressed. Strongest expression in mammary gland, heart and muscle. Detected in HeLa, HEK293T, THP-1, HL-60, Raji and Jurkat cell lines (at protein level).

It localises to the mitochondrion outer membrane. Participates in antiviral signaling. Acts as a negative regulator of MAVS-mediated antiviral responses, through the inhibition of the virus-induced RLH (RIG-like helicase)-MAVS interaction. Instead, promotes autophagy by interacting with TUFM and subsequently recruiting the autophagy-related proteins ATG5 and ATG12. Also regulates MAVS-dependent NLRP3 inflammasome activation to attenuate apoptosis. Has no inhibitory function on NF-kappa-B signaling pathway, but enhances NF-kappa-B and JUN N-terminal kinase dependent signaling through the production of reactive oxygen species. Regulates viral mediated-inflammation and energy metabolism in a sex-dependent manner. In females, prevents uncontrolled inflammation and energy metabolism and thus, may contribute to the sex differences observed in infectious and inflammatory diseases. The protein is NLR family member X1 (NLRX1) of Homo sapiens (Human).